A 624-amino-acid chain; its full sequence is Chaperone protein HtpG (624 aa).

Residues 1–336 (MKGQETRGFQ…SSDLPLNVSR (336 aa)) form an a; substrate-binding region. Residues 337–552 (EILQDSTVTR…ADEMSTQMAK (216 aa)) form a b region. The tract at residues 553 to 624 (LFAAAGQKVP…IRRMNQLLVS (72 aa)) is c.

Belongs to the heat shock protein 90 family. Homodimer.

The protein resides in the cytoplasm. In terms of biological role, molecular chaperone. Has ATPase activity. This is Chaperone protein HtpG from Shigella boydii serotype 4 (strain Sb227).